Reading from the N-terminus, the 689-residue chain is Glycine--tRNA ligase beta subunit (689 aa).

This sequence belongs to the class-II aminoacyl-tRNA synthetase family. In terms of assembly, tetramer of two alpha and two beta subunits.

It is found in the cytoplasm. The enzyme catalyses tRNA(Gly) + glycine + ATP = glycyl-tRNA(Gly) + AMP + diphosphate. The polypeptide is Glycine--tRNA ligase beta subunit (Shewanella amazonensis (strain ATCC BAA-1098 / SB2B)).